We begin with the raw amino-acid sequence, 365 residues long: Putative nudix hydrolase 1 (365 aa).

The Nudix hydrolase domain occupies 72–201 (VNYVAAAIIL…DFIRLVDEAV (130 aa)). Positions 109–130 (GRVEAGETIEEAVVREVKEETG) match the Nudix box motif. Positions 124 and 128 each coordinate Mg(2+).

Belongs to the Nudix hydrolase family. The cofactor is Mg(2+). Mn(2+) serves as cofactor.

Probably mediates the hydrolysis of some nucleoside diphosphate derivatives. The sequence is that of Putative nudix hydrolase 1 (ndx-1) from Caenorhabditis elegans.